A 179-amino-acid chain; its full sequence is Inosine/xanthosine triphosphatase (179 aa).

E71 contacts Mg(2+). 71 to 72 (EA) contributes to the substrate binding site.

The protein belongs to the YjjX NTPase family. Homodimer. Mg(2+) is required as a cofactor. It depends on Mn(2+) as a cofactor.

It catalyses the reaction XTP + H2O = XDP + phosphate + H(+). It carries out the reaction ITP + H2O = IDP + phosphate + H(+). In terms of biological role, phosphatase that hydrolyzes non-canonical purine nucleotides such as XTP and ITP to their respective diphosphate derivatives. Probably excludes non-canonical purines from DNA/RNA precursor pool, thus preventing their incorporation into DNA/RNA and avoiding chromosomal lesions. The polypeptide is Inosine/xanthosine triphosphatase (Shewanella sp. (strain MR-7)).